We begin with the raw amino-acid sequence, 133 residues long: Histone H2A.1 (133 aa).

Residues 1–23 (MSTTGKGGKAKGKTASSKQVSRS) are disordered. Ser-2 carries the post-translational modification N-acetylserine. N6-acetyllysine is present on residues Lys-6, Lys-9, Lys-11, Lys-13, and Lys-18. A Phosphoserine modification is found at Ser-123. Residue Lys-124 forms a Glycyl lysine isopeptide (Lys-Gly) (interchain with G-Cter in ubiquitin) linkage.

This sequence belongs to the histone H2A family. The nucleosome is a histone octamer containing two molecules each of H2A, H2B, H3 and H4 assembled in one H3-H4 heterotetramer and two H2A-H2B heterodimers. The octamer wraps approximately 147 bp of DNA. In terms of processing, monoubiquitination of Lys-124 gives a specific tag for epigenetic transcriptional repression. Acetylation occurs almost exclusively in the MAC.

It localises to the nucleus. The protein localises to the chromosome. Its function is as follows. Core component of nucleosome. Nucleosomes wrap and compact DNA into chromatin, limiting DNA accessibility to the cellular machineries which require DNA as a template. Histones thereby play a central role in transcription regulation, DNA repair, DNA replication and chromosomal stability. DNA accessibility is regulated via a complex set of post-translational modifications of histones, also called histone code, and nucleosome remodeling. The protein is Histone H2A.1 (HTA2) of Tetrahymena thermophila (strain SB210).